Consider the following 518-residue polypeptide: Putative malate dehydrogenase 1B (518 aa).

It belongs to the LDH/MDH superfamily. MDH type 2 family.

This is Putative malate dehydrogenase 1B (MDH1B) from Homo sapiens (Human).